The chain runs to 395 residues: Chalcone synthase 3 (395 aa).

V2 is subject to N-acetylvaline. C169 is an active-site residue.

It belongs to the thiolase-like superfamily. Chalcone/stilbene synthases family.

The enzyme catalyses (E)-4-coumaroyl-CoA + 3 malonyl-CoA + 3 H(+) = 2',4,4',6'-tetrahydroxychalcone + 3 CO2 + 4 CoA. It functions in the pathway secondary metabolite biosynthesis; flavonoid biosynthesis. In terms of biological role, the primary product of this enzyme is 4,2',4',6'-tetrahydroxychalcone (also termed naringenin-chalcone or chalcone) which can under specific conditions spontaneously isomerize into naringenin. In Sinapis alba (White mustard), this protein is Chalcone synthase 3 (CHS3).